Reading from the N-terminus, the 241-residue chain is Major microneme antigen (241 aa).

An N-terminal signal peptide occupies residues 1–34; the sequence is MTLPIHFPRCVLYGMASAVWSILFLHILVGDTMS. A propeptide spanning residues 35-103 is cleaved from the precursor; the sequence is AADALSWSGG…ATGRGPSFVH (69 aa). Residues 64–83 show a composition bias toward basic and acidic residues; the sequence is GKELEQQHGGEEQQMQRDTK. A disordered region spans residues 64 to 90; it reads GKELEQQHGGEEQQMQRDTKPAAFSNP. 2 consecutive PAN domains span residues 112 to 181 and 185 to 241; these read CFPH…PRSC and CTDN…VERA. Disulfide bonds link Cys-112-Cys-181, Cys-137-Cys-159, Cys-141-Cys-147, Cys-185-Cys-189, Cys-210-Cys-230, and Cys-214-Cys-220. Ser-121 provides a ligand contact to a carbohydrate. A carbohydrate is bound by residues Lys-162, Tyr-169, and Asp-174.

The protein belongs to the microneme antigen family. As to quaternary structure, homodimer or heterodimer of major microneme antigen and microneme antigen. Contains six disulfide bonds.

Its subcellular location is the cytoplasmic vesicle. It is found in the secretory vesicle. The protein resides in the microneme. Functionally, galactose-binding lectin. Plays a role in adhesion to the host cell. Has a potential role in invasion of host cells. The sequence is that of Major microneme antigen from Sarcocystis muris.